The chain runs to 243 residues: UPF0758 protein sll0766 (243 aa).

Residues 113–235 enclose the MPN domain; the sequence is VVDSPEAAAI…HQSLRQCTDL (123 aa). Zn(2+) is bound by residues His-184, His-186, and Asp-197. The JAMM motif signature appears at 184 to 197; the sequence is HNHPSGGLEPSPED.

It belongs to the UPF0758 family.

This chain is UPF0758 protein sll0766, found in Synechocystis sp. (strain ATCC 27184 / PCC 6803 / Kazusa).